Reading from the N-terminus, the 240-residue chain is UDP-2,3-diacylglucosamine hydrolase (240 aa).

5 residues coordinate Mn(2+): D8, H10, D41, N79, and H114. 79-80 (NR) is a substrate binding site. Residues D122, S160, N164, K167, and H195 each coordinate substrate. Mn(2+) contacts are provided by H195 and H197.

This sequence belongs to the LpxH family. It depends on Mn(2+) as a cofactor.

It localises to the cell inner membrane. It catalyses the reaction UDP-2-N,3-O-bis[(3R)-3-hydroxytetradecanoyl]-alpha-D-glucosamine + H2O = 2-N,3-O-bis[(3R)-3-hydroxytetradecanoyl]-alpha-D-glucosaminyl 1-phosphate + UMP + 2 H(+). It functions in the pathway glycolipid biosynthesis; lipid IV(A) biosynthesis; lipid IV(A) from (3R)-3-hydroxytetradecanoyl-[acyl-carrier-protein] and UDP-N-acetyl-alpha-D-glucosamine: step 4/6. Its function is as follows. Hydrolyzes the pyrophosphate bond of UDP-2,3-diacylglucosamine to yield 2,3-diacylglucosamine 1-phosphate (lipid X) and UMP by catalyzing the attack of water at the alpha-P atom. Involved in the biosynthesis of lipid A, a phosphorylated glycolipid that anchors the lipopolysaccharide to the outer membrane of the cell. The sequence is that of UDP-2,3-diacylglucosamine hydrolase from Proteus mirabilis (strain HI4320).